Here is a 413-residue protein sequence, read N- to C-terminus: uncharacterized protein (413 aa).

4 helical membrane-spanning segments follow: residues 22–42, 270–290, 312–332, and 379–399; these read VLLV…TLIL, IIYV…ISIC, ILIQ…GNLI, and LIII…YPIY.

This sequence belongs to the ABC-4 integral membrane protein family. LolC/E subfamily.

Its subcellular location is the cell membrane. This is an uncharacterized protein from Buchnera aphidicola subsp. Schizaphis graminum (strain Sg).